Here is a 243-residue protein sequence, read N- to C-terminus: Uridylate kinase (243 aa).

Residue 18–21 participates in ATP binding; sequence KLGG. Residue G59 participates in UMP binding. ATP contacts are provided by G60 and R64. UMP-binding positions include D79 and 140–147; that span reads MGMPYFST. ATP contacts are provided by Y173 and D176.

It belongs to the UMP kinase family. Homohexamer.

It is found in the cytoplasm. The catalysed reaction is UMP + ATP = UDP + ADP. Its pathway is pyrimidine metabolism; CTP biosynthesis via de novo pathway; UDP from UMP (UMPK route): step 1/1. With respect to regulation, inhibited by UTP. In terms of biological role, catalyzes the reversible phosphorylation of UMP to UDP. In Corynebacterium efficiens (strain DSM 44549 / YS-314 / AJ 12310 / JCM 11189 / NBRC 100395), this protein is Uridylate kinase.